A 147-amino-acid chain; its full sequence is Lysozyme C-2 (147 aa).

The first 18 residues, 1–18 (MKALVILGFLFLSVAVQG), serve as a signal peptide directing secretion. One can recognise a C-type lysozyme domain in the interval 19–147 (KVFERCELAR…VSSYVEGCTL (129 aa)). Disulfide bonds link cysteine 24/cysteine 145, cysteine 48/cysteine 133, cysteine 83/cysteine 99, and cysteine 95/cysteine 113. Residues glutamate 53 and aspartate 71 contribute to the active site.

This sequence belongs to the glycosyl hydrolase 22 family. In terms of assembly, monomer. As to expression, stomach-specific.

It catalyses the reaction Hydrolysis of (1-&gt;4)-beta-linkages between N-acetylmuramic acid and N-acetyl-D-glucosamine residues in a peptidoglycan and between N-acetyl-D-glucosamine residues in chitodextrins.. Its function is as follows. Lysozymes have primarily a bacteriolytic function; those in tissues and body fluids are associated with the monocyte-macrophage system and enhance the activity of immunoagents. The polypeptide is Lysozyme C-2 (LYZ2) (Bos taurus (Bovine)).